The primary structure comprises 157 residues: UPF0262 protein RHE_CH00582 (157 aa).

Belongs to the UPF0262 family.

In Rhizobium etli (strain ATCC 51251 / DSM 11541 / JCM 21823 / NBRC 15573 / CFN 42), this protein is UPF0262 protein RHE_CH00582.